An 866-amino-acid chain; its full sequence is Replication factor C small subunit (866 aa).

A DOD-type homing endonuclease domain is found at 183 to 313 (WLGYFIGDGH…VTYALAGFGI (131 aa)).

The protein belongs to the activator 1 small subunits family. RfcS subfamily. In terms of assembly, heteromultimer composed of small subunits (RfcS) and large subunits (RfcL). In terms of processing, this protein undergoes a protein self splicing that involves a post-translational excision of the intervening region (intein) followed by peptide ligation.

Functionally, part of the RFC clamp loader complex which loads the PCNA sliding clamp onto DNA. This is Replication factor C small subunit (rfcS) from Thermococcus kodakarensis (strain ATCC BAA-918 / JCM 12380 / KOD1) (Pyrococcus kodakaraensis (strain KOD1)).